Here is a 184-residue protein sequence, read N- to C-terminus: NADH-quinone oxidoreductase subunit B 1 (184 aa).

Cys37, Cys38, Cys103, and Cys132 together coordinate [4Fe-4S] cluster.

Belongs to the complex I 20 kDa subunit family. In terms of assembly, NDH-1 is composed of 14 different subunits. Subunits NuoB, C, D, E, F, and G constitute the peripheral sector of the complex. It depends on [4Fe-4S] cluster as a cofactor.

The protein localises to the cell membrane. It carries out the reaction a quinone + NADH + 5 H(+)(in) = a quinol + NAD(+) + 4 H(+)(out). Its function is as follows. NDH-1 shuttles electrons from NADH, via FMN and iron-sulfur (Fe-S) centers, to quinones in the respiratory chain. The immediate electron acceptor for the enzyme in this species is believed to be a menaquinone. Couples the redox reaction to proton translocation (for every two electrons transferred, four hydrogen ions are translocated across the cytoplasmic membrane), and thus conserves the redox energy in a proton gradient. This Streptomyces coelicolor (strain ATCC BAA-471 / A3(2) / M145) protein is NADH-quinone oxidoreductase subunit B 1.